An 862-amino-acid chain; its full sequence is Leucine--tRNA ligase (862 aa).

A 'HIGH' region motif is present at residues 51–61 (PYPSGSLHMGH). A 'KMSKS' region motif is present at residues 624 to 628 (KMSKS). Lys-627 contacts ATP.

The protein belongs to the class-I aminoacyl-tRNA synthetase family.

The protein localises to the cytoplasm. The catalysed reaction is tRNA(Leu) + L-leucine + ATP = L-leucyl-tRNA(Leu) + AMP + diphosphate. The chain is Leucine--tRNA ligase from Prochlorococcus marinus (strain NATL1A).